Reading from the N-terminus, the 275-residue chain is Large ribosomal subunit protein uL2 (275 aa).

The segment at 221–275 (RGSAMTPRDHPHGGGEGKAPRGMPPKTPWGKPALGKRTRRNKKSDRFIIRRRYEA) is disordered. Over residues 227–239 (PRDHPHGGGEGKA) the composition is skewed to basic and acidic residues. Over residues 254 to 263 (LGKRTRRNKK) the composition is skewed to basic residues. Basic and acidic residues predominate over residues 264–275 (SDRFIIRRRYEA).

Belongs to the universal ribosomal protein uL2 family. In terms of assembly, part of the 50S ribosomal subunit. Forms a bridge to the 30S subunit in the 70S ribosome.

One of the primary rRNA binding proteins. Required for association of the 30S and 50S subunits to form the 70S ribosome, for tRNA binding and peptide bond formation. It has been suggested to have peptidyltransferase activity; this is somewhat controversial. Makes several contacts with the 16S rRNA in the 70S ribosome. The protein is Large ribosomal subunit protein uL2 of Thermomicrobium roseum (strain ATCC 27502 / DSM 5159 / P-2).